The chain runs to 334 residues: MASVKEGDYQALKEEIKKIMKQPGYDDGSAGPVLVRLAWHASGNFSLVEHNGGSNGAGMRFPPESVDPANAGLHYAISFLLPLQSANSWISHADLWTLAGVTAIEAMGGPQIPWEPGRLDYESEQAAVEHRGDVSNRLPDGALGAAHIRDVFGRMGFSDQEIVALSGAHNLGRCHADRSGFDGPWVVNPTRFSNQYFKLLLRPIWKPRQWDGPFQYEAIVAGTRLMMLPTDMALIEDPSFRPWVEKYAADQNLFFKDFANAFGKLIELGVDRDDTGFARLAKKAAEEGKPLDKTAPPAGDETCPVSGAVGGGVQRAAGGGGCPFMAMQNREAKL.

Histidine 40 functions as the Proton acceptor in the catalytic mechanism. Histidine 169 is a heme b binding site. Catalysis depends on tryptophan 185, which acts as the Tryptophan radical intermediate.

The protein belongs to the peroxidase family. Cytochrome c peroxidase subfamily. The cofactor is heme b.

Its function is as follows. Destroys radicals which are normally produced within the cells and which are toxic to biological systems. The protein is Putative heme-binding peroxidase of Cryptococcus neoformans var. neoformans serotype D (strain JEC21 / ATCC MYA-565) (Filobasidiella neoformans).